Here is a 193-residue protein sequence, read N- to C-terminus: Holliday junction branch migration complex subunit RuvA (193 aa).

Residues 1–64 (MIGRIAGVLL…EDAHLLYGFL (64 aa)) form a domain I region. The segment at 65-139 (TPQERSTFRE…GKLGADLGAM (75 aa)) is domain II. The tract at residues 139 to 143 (MAGAA) is flexible linker. The domain III stretch occupies residues 144 to 193 (SQSDHASDILNALLALGYSEKEGLAAIKNVPAGTGVSEGIKLALKALSKA).

This sequence belongs to the RuvA family. Homotetramer. Forms an RuvA(8)-RuvB(12)-Holliday junction (HJ) complex. HJ DNA is sandwiched between 2 RuvA tetramers; dsDNA enters through RuvA and exits via RuvB. An RuvB hexamer assembles on each DNA strand where it exits the tetramer. Each RuvB hexamer is contacted by two RuvA subunits (via domain III) on 2 adjacent RuvB subunits; this complex drives branch migration. In the full resolvosome a probable DNA-RuvA(4)-RuvB(12)-RuvC(2) complex forms which resolves the HJ.

The protein localises to the cytoplasm. In terms of biological role, the RuvA-RuvB-RuvC complex processes Holliday junction (HJ) DNA during genetic recombination and DNA repair, while the RuvA-RuvB complex plays an important role in the rescue of blocked DNA replication forks via replication fork reversal (RFR). RuvA specifically binds to HJ cruciform DNA, conferring on it an open structure. The RuvB hexamer acts as an ATP-dependent pump, pulling dsDNA into and through the RuvAB complex. HJ branch migration allows RuvC to scan DNA until it finds its consensus sequence, where it cleaves and resolves the cruciform DNA. The chain is Holliday junction branch migration complex subunit RuvA from Paraburkholderia phymatum (strain DSM 17167 / CIP 108236 / LMG 21445 / STM815) (Burkholderia phymatum).